The chain runs to 348 residues: Phosphate acyltransferase (348 aa).

It belongs to the PlsX family. In terms of assembly, homodimer. Probably interacts with PlsY.

It localises to the cytoplasm. The enzyme catalyses a fatty acyl-[ACP] + phosphate = an acyl phosphate + holo-[ACP]. It functions in the pathway lipid metabolism; phospholipid metabolism. In terms of biological role, catalyzes the reversible formation of acyl-phosphate (acyl-PO(4)) from acyl-[acyl-carrier-protein] (acyl-ACP). This enzyme utilizes acyl-ACP as fatty acyl donor, but not acyl-CoA. In Neisseria gonorrhoeae (strain ATCC 700825 / FA 1090), this protein is Phosphate acyltransferase.